We begin with the raw amino-acid sequence, 349 residues long: Protein RecA (349 aa).

Residue glycine 65–threonine 72 participates in ATP binding.

Belongs to the RecA family.

Its subcellular location is the cytoplasm. In terms of biological role, can catalyze the hydrolysis of ATP in the presence of single-stranded DNA, the ATP-dependent uptake of single-stranded DNA by duplex DNA, and the ATP-dependent hybridization of homologous single-stranded DNAs. It interacts with LexA causing its activation and leading to its autocatalytic cleavage. In Clostridium acetobutylicum (strain ATCC 824 / DSM 792 / JCM 1419 / IAM 19013 / LMG 5710 / NBRC 13948 / NRRL B-527 / VKM B-1787 / 2291 / W), this protein is Protein RecA.